The chain runs to 126 residues: Aspartate 1-decarboxylase (126 aa).

The active-site Schiff-base intermediate with substrate; via pyruvic acid is Ser-25. Ser-25 carries the pyruvic acid (Ser) modification. Thr-57 provides a ligand contact to substrate. Catalysis depends on Tyr-58, which acts as the Proton donor. 73–75 is a binding site for substrate; it reads GGA.

This sequence belongs to the PanD family. In terms of assembly, heterooctamer of four alpha and four beta subunits. Pyruvate is required as a cofactor. Is synthesized initially as an inactive proenzyme, which is activated by self-cleavage at a specific serine bond to produce a beta-subunit with a hydroxyl group at its C-terminus and an alpha-subunit with a pyruvoyl group at its N-terminus.

The protein resides in the cytoplasm. It carries out the reaction L-aspartate + H(+) = beta-alanine + CO2. Its pathway is cofactor biosynthesis; (R)-pantothenate biosynthesis; beta-alanine from L-aspartate: step 1/1. Functionally, catalyzes the pyruvoyl-dependent decarboxylation of aspartate to produce beta-alanine. The chain is Aspartate 1-decarboxylase from Xanthomonas campestris pv. campestris (strain B100).